The following is a 165-amino-acid chain: NADPH-dependent 7-cyano-7-deazaguanine reductase (165 aa).

Residue cysteine 56 is the Thioimide intermediate of the active site. The active-site Proton donor is aspartate 63. Substrate contacts are provided by residues 78–80 and 97–98; these read VES and HE.

It belongs to the GTP cyclohydrolase I family. QueF type 1 subfamily.

It localises to the cytoplasm. The catalysed reaction is 7-aminomethyl-7-carbaguanine + 2 NADP(+) = 7-cyano-7-deazaguanine + 2 NADPH + 3 H(+). Its pathway is tRNA modification; tRNA-queuosine biosynthesis. Its function is as follows. Catalyzes the NADPH-dependent reduction of 7-cyano-7-deazaguanine (preQ0) to 7-aminomethyl-7-deazaguanine (preQ1). This Bacillus anthracis (strain A0248) protein is NADPH-dependent 7-cyano-7-deazaguanine reductase.